Consider the following 208-residue polypeptide: Peptidyl-tRNA hydrolase 2 (208 aa).

The segment covering S32–L45 has biased composition (low complexity). Residues S32–L81 are disordered. A compositionally biased stretch (basic and acidic residues) spans R46–D58. The segment covering T59–E77 has biased composition (acidic residues). A Glycyl lysine isopeptide (Lys-Gly) (interchain with G-Cter in ubiquitin) cross-link involves residue K152.

This sequence belongs to the PTH2 family.

It is found in the cytoplasm. The catalysed reaction is an N-acyl-L-alpha-aminoacyl-tRNA + H2O = an N-acyl-L-amino acid + a tRNA + H(+). Functionally, the natural substrate for this enzyme may be peptidyl-tRNAs which drop off the ribosome during protein synthesis. This Saccharomyces cerevisiae (strain ATCC 204508 / S288c) (Baker's yeast) protein is Peptidyl-tRNA hydrolase 2.